The sequence spans 387 residues: Eukaryotic translation initiation factor 3 subunit M (387 aa).

In terms of domain architecture, PCI spans 181–340; that stretch reads LSSKVMIELL…HKVHITSTMH (160 aa).

The protein belongs to the eIF-3 subunit M family. Component of the eukaryotic translation initiation factor 3 (eIF-3) complex. The eIF-3 complex interacts with pix.

The protein resides in the cytoplasm. It localises to the golgi apparatus. Functionally, component of the eukaryotic translation initiation factor 3 (eIF-3) complex, which is involved in protein synthesis of a specialized repertoire of mRNAs and, together with other initiation factors, stimulates binding of mRNA and methionyl-tRNAi to the 40S ribosome. The eIF-3 complex specifically targets and initiates translation of a subset of mRNAs involved in cell proliferation. This Drosophila erecta (Fruit fly) protein is Eukaryotic translation initiation factor 3 subunit M.